A 253-amino-acid chain; its full sequence is Patatin-like phospholipase domain-containing protein 4 (253 aa).

Residues 6 to 176 (LSFAACGFLG…TNALPILPVG (171 aa)) enclose the PNPLA domain. The short motif at 41-45 (GASAG) is the GXSXG element. Serine 43 functions as the Nucleophile in the catalytic mechanism. Aspartate 163 acts as the Proton acceptor in catalysis. Positions 163–165 (DGG) match the DGA/G motif.

Expressed in all tissues examined, including heart, brain, placenta, lung, liver, muscle, kidney, pancreas and spleen.

It localises to the mitochondrion. The enzyme catalyses a triacylglycerol + H2O = a diacylglycerol + a fatty acid + H(+). It carries out the reaction a 1,2-diacyl-sn-glycero-3-phosphocholine + H2O = a 1-acyl-sn-glycero-3-phosphocholine + a fatty acid + H(+). The catalysed reaction is an all-trans-retinyl ester + H2O = all-trans-retinol + a fatty acid + H(+). It catalyses the reaction 2 a 1-acylglycerol = a 1,2-diacylglycerol + glycerol. The enzyme catalyses a 1-acylglycerol + a 1,2-diacylglycerol = a triacylglycerol + glycerol. It carries out the reaction a 1-acylglycerol + a 1,3-diacylglycerol = a triacylglycerol + glycerol. The catalysed reaction is a triacylglycerol + H2O = a 1,2-diacylglycerol + a fatty acid + H(+). It catalyses the reaction a triacylglycerol + H2O = a 1,3-diacylglycerol + a fatty acid + H(+). The enzyme catalyses a triacylglycerol + all-trans-retinol = an all-trans-retinyl ester + a diacylglycerol. It carries out the reaction 2 1-(9Z-octadecenoyl)-glycerol = 1,2-di-(9Z-octadecenoyl)-glycerol + glycerol. The catalysed reaction is 1-(9Z-octadecenoyl)-glycerol + 1,2-di-(9Z-octadecenoyl)-glycerol = 1,2,3-tri-(9Z-octadecenoyl)-glycerol + glycerol. It catalyses the reaction 1-(9Z-octadecenoyl)-glycerol + 1,3-di-(9Z-octadecenoyl)-glycerol = 1,2,3-tri-(9Z-octadecenoyl)-glycerol + glycerol. The enzyme catalyses 1,2-di-(9Z-octadecenoyl)-glycerol + (9Z)-octadecenoate + H(+) = 1,2,3-tri-(9Z-octadecenoyl)-glycerol + H2O. It carries out the reaction 1,2,3-tri-(9Z-octadecenoyl)-glycerol + H2O = 1,3-di-(9Z-octadecenoyl)-glycerol + (9Z)-octadecenoate + H(+). The catalysed reaction is all-trans-retinyl hexadecanoate + H2O = all-trans-retinol + hexadecanoate + H(+). It catalyses the reaction 1,2,3-tri-(9Z-octadecenoyl)-glycerol + all-trans-retinol = all-trans-retinyl 9Z-octadecenoate + di-(9Z)-octadecenoylglycerol. Its activity is regulated as follows. The triglyceride lipase activity is inhibited by BEL ((E)-6-(bromomethylene)-3-(1-naphthalenyl)-2H-tetrahydropyran-2-one), a suicide substrate inhibitor. Has abundant triacylglycerol lipase activity. Transfers fatty acid from triglyceride to retinol, hydrolyzes retinylesters, and generates 1,3-diacylglycerol from triglycerides. Additionally possesses acylglycerol transacylase and phospholipase A2 activities. This is Patatin-like phospholipase domain-containing protein 4 from Homo sapiens (Human).